The chain runs to 207 residues: HTH-type transcriptional regulator BetI 2 (207 aa).

One can recognise an HTH tetR-type domain in the interval 8-68; the sequence is PIRRQQLIKA…ATMRQILTDL (61 aa). The H-T-H motif DNA-binding region spans 31–50; that stretch reads TVMRIARHAGVSAGIISHYF.

The protein operates within amine and polyamine biosynthesis; betaine biosynthesis via choline pathway [regulation]. In terms of biological role, repressor involved in the biosynthesis of the osmoprotectant glycine betaine. It represses transcription of the choline transporter BetT and the genes of BetAB involved in the synthesis of glycine betaine. The protein is HTH-type transcriptional regulator BetI 2 of Chromohalobacter salexigens (strain ATCC BAA-138 / DSM 3043 / CIP 106854 / NCIMB 13768 / 1H11).